We begin with the raw amino-acid sequence, 81 residues long: Serine protease inhibitor Kazal-type 2 (81 aa).

Residues 1-21 (MALAVLRLALLLLAVTFAGPL) form the signal peptide. One can recognise a Kazal-like domain in the interval 27-81 (KYKTPFCARYQLPGCPRDFNPVCGTDMITYPNECTLCMKIRESGQNIKILRRGPC). 3 disulfide bridges follow: C33–C63, C41–C60, and C49–C81.

More abundant in epididymis than in testis.

It localises to the secreted. It is found in the cytoplasmic vesicle. The protein localises to the secretory vesicle. The protein resides in the acrosome. Functionally, strong inhibitor of acrosin in male and/or female genital tract. Also inhibits trypsin. In terms of biological role, as a strong inhibitor of acrosin, it is required for normal spermiogenesis. It probably hinders premature activation of proacrosin and other proteases, thus preventing the cascade of events leading to spermiogenesis defects. May be involved in the regulation of serine protease-dependent germ cell apoptosis. It also inhibits trypsin. The protein is Serine protease inhibitor Kazal-type 2 (SPINK2) of Macaca fascicularis (Crab-eating macaque).